A 979-amino-acid polypeptide reads, in one-letter code: UPF0182 protein Rv0064 (979 aa).

The next 7 membrane-spanning stretches (helical) occupy residues 19 to 41, 63 to 85, 114 to 136, 174 to 196, 208 to 230, 261 to 280, and 285 to 307; these read LVTA…DIYV, LAIV…LLAY, LFGW…FDWV, WLFV…FGGL, AARV…AYWL, LVLV…AIFL, and IPAM…WPLL. A disordered region spans residues 898 to 948; that stretch reads GTGRVATARGGDAASAPPPGAGGPAPPQAVPPPRTTQPPAAPPRGPDVPPA. Positions 913–946 are enriched in pro residues; that stretch reads APPPGAGGPAPPQAVPPPRTTQPPAAPPRGPDVP.

The protein belongs to the UPF0182 family.

Its subcellular location is the cell membrane. This Mycobacterium tuberculosis (strain ATCC 25618 / H37Rv) protein is UPF0182 protein Rv0064.